The primary structure comprises 101 residues: NADH-quinone oxidoreductase subunit K (101 aa).

The next 3 helical transmembrane spans lie at 4-24 (LSHYLTVAAILFTLGVLGIFI), 30-50 (IVILMCVELILLAVNINLVAF), and 65-85 (FVLTVAAAEAAIGLAILVVFF).

This sequence belongs to the complex I subunit 4L family. As to quaternary structure, NDH-1 is composed of 14 different subunits. Subunits NuoA, H, J, K, L, M, N constitute the membrane sector of the complex.

The protein resides in the cell inner membrane. The catalysed reaction is a quinone + NADH + 5 H(+)(in) = a quinol + NAD(+) + 4 H(+)(out). Functionally, NDH-1 shuttles electrons from NADH, via FMN and iron-sulfur (Fe-S) centers, to quinones in the respiratory chain. The immediate electron acceptor for the enzyme in this species is believed to be ubiquinone. Couples the redox reaction to proton translocation (for every two electrons transferred, four hydrogen ions are translocated across the cytoplasmic membrane), and thus conserves the redox energy in a proton gradient. In Methylobacterium sp. (strain 4-46), this protein is NADH-quinone oxidoreductase subunit K.